The primary structure comprises 367 residues: Methylated-thiol--coenzyme M methyltransferase (367 aa).

Residues His-236, Cys-238, and Cys-313 each contribute to the Zn(2+) site.

The protein belongs to the uroporphyrinogen decarboxylase family. As to quaternary structure, homodimer. It depends on Zn(2+) as a cofactor.

It carries out the reaction methanethiol + coenzyme M = methyl-coenzyme M + hydrogen sulfide + H(+). In terms of biological role, methyltransferase involved in methanogenesis from methylated-thiols. Catalyzes two successive steps: mediates the transfer of a methyl group from the substrate to the cobalt cofactor of a methylated-thiol-specific corrinoid protein (MtsB), and the subsequent transfer of the methyl group from the corrinoid protein to coenzyme M. The polypeptide is Methylated-thiol--coenzyme M methyltransferase (mtsA) (Methanosarcina mazei (strain ATCC BAA-159 / DSM 3647 / Goe1 / Go1 / JCM 11833 / OCM 88) (Methanosarcina frisia)).